Here is a 504-residue protein sequence, read N- to C-terminus: Glycerol kinase (504 aa).

Threonine 13 contacts ADP. Residues threonine 13, threonine 14, and serine 15 each contribute to the ATP site. Residue threonine 13 coordinates sn-glycerol 3-phosphate. Arginine 17 serves as a coordination point for ADP. Sn-glycerol 3-phosphate contacts are provided by arginine 83, glutamate 84, and tyrosine 135. Residues arginine 83, glutamate 84, and tyrosine 135 each contribute to the glycerol site. Histidine 231 bears the Phosphohistidine; by HPr mark. Residue aspartate 245 coordinates sn-glycerol 3-phosphate. Positions 245 and 246 each coordinate glycerol. Residues threonine 267 and glycine 310 each coordinate ADP. 4 residues coordinate ATP: threonine 267, glycine 310, glutamine 314, and glycine 411. ADP is bound by residues glycine 411 and asparagine 415.

It belongs to the FGGY kinase family. As to quaternary structure, homotetramer and homodimer (in equilibrium). The phosphoenolpyruvate-dependent sugar phosphotransferase system (PTS), including enzyme I, and histidine-containing protein (HPr) are required for the phosphorylation, which leads to the activation of the enzyme.

It carries out the reaction glycerol + ATP = sn-glycerol 3-phosphate + ADP + H(+). It functions in the pathway polyol metabolism; glycerol degradation via glycerol kinase pathway; sn-glycerol 3-phosphate from glycerol: step 1/1. Activated by phosphorylation and inhibited by fructose 1,6-bisphosphate (FBP). In terms of biological role, key enzyme in the regulation of glycerol uptake and metabolism. Catalyzes the phosphorylation of glycerol to yield sn-glycerol 3-phosphate. The protein is Glycerol kinase of Pediococcus pentosaceus (strain ATCC 25745 / CCUG 21536 / LMG 10740 / 183-1w).